A 145-amino-acid chain; its full sequence is MMDVNEIRQYLPHRYPFLLVDRIVEINLNDSIIAYKNVTINEPFFNGHFPNHPVMPGVLIIEAMAQAAGVLGFKSMDKKPEDGSIYYFVGADNARFKRPVVPGDRLQLEAKIIAEKRGIWKFECRATVDGQLACSATIMCADRKI.

Residue histidine 48 is part of the active site.

Belongs to the thioester dehydratase family. FabZ subfamily.

The protein localises to the cytoplasm. It carries out the reaction a (3R)-hydroxyacyl-[ACP] = a (2E)-enoyl-[ACP] + H2O. Its function is as follows. Involved in unsaturated fatty acids biosynthesis. Catalyzes the dehydration of short chain beta-hydroxyacyl-ACPs and long chain saturated and unsaturated beta-hydroxyacyl-ACPs. The chain is 3-hydroxyacyl-[acyl-carrier-protein] dehydratase FabZ from Marinomonas sp. (strain MWYL1).